Consider the following 487-residue polypeptide: UDP-glucose flavonoid 3-O-glucosyltransferase 7 (487 aa).

Histidine 23 functions as the Proton acceptor in the catalytic mechanism. An an anthocyanidin-binding site is contributed by histidine 23. Catalysis depends on aspartate 121, which acts as the Charge relay. UDP-alpha-D-glucose contacts are provided by alanine 345, glutamine 347, histidine 362, tryptophan 365, asparagine 366, serine 367, and glutamate 370. Glycine 385 contacts an anthocyanidin. Glutamate 386 and glutamine 387 together coordinate UDP-alpha-D-glucose.

Belongs to the UDP-glycosyltransferase family. As to expression, strongly expressed in achenes and receptacles.

The enzyme catalyses a flavonol + UDP-alpha-D-glucose = a flavonol 3-O-beta-D-glucoside + UDP + H(+). Functionally, broad spectrum multifunctional glucosyltransferase. Catalyzes the formation of flavonol 3-O- and 4'-O-glucosides during fruit ripening. Accepted substrates include several flavonoids, hydroxycoumarins and beta-naphthols. Uses UDP-Glc as a sugar donor, but not UDP-Gal or UDP-GlcUA. May also be involved in detoxification of xenobiotics. This chain is UDP-glucose flavonoid 3-O-glucosyltransferase 7, found in Fragaria ananassa (Strawberry).